The following is a 376-amino-acid chain: Actin-related protein T1 (376 aa).

The protein belongs to the actin family. In skin, expressed in the basal, spinous and granular layers of the epidermis. Also expressed in hair follicles, sebaceaous glands, eccrine sweat glands and semen.

It localises to the cytoplasm. It is found in the cytoskeleton. Its subcellular location is the nucleus. The protein localises to the cytoplasmic vesicle. The protein resides in the secretory vesicle. It localises to the acrosome. In terms of biological role, negatively regulates the Hedgehog (SHH) signaling. Binds to the promoter of the SHH signaling mediator, GLI1, and inhibits its expression. The polypeptide is Actin-related protein T1 (Homo sapiens (Human)).